The chain runs to 267 residues: MSKIAQPTATDVGAMYDNHTDLMTDIMAGFIHVGYWEDPENPTETIELATERMTLEVLNRLRPSPGQHILDVGCGTGKTAASIATTHDVSITGITVSNHQIEVARKTYEALVETGKLNFQYADAMQLPLANASFDGAYAIESIVHMNDRRAALSNIARVLRPGSRLSIADLVLDDGCPDPDAIANWHELFQVPALISADKLKELLTETGFRVLECVDIRQHIRPICGVMDKKGLQVGGEVGKTLRGVAASLHGLEELGYILLVAERV.

S-adenosyl-L-methionine is bound by residues Q100 and H145.

The protein belongs to the methyltransferase superfamily.

The protein operates within antifungal biosynthesis. In terms of biological role, O-methyltransferase; part of the gene cluster that mediates the biosynthesis of the tetrahydropyranyl antifungal agent lanomycin that acts as an inhibitor of CYP51 and blocks the ergosterol biosynthesis. The biosynthesis probably begins with the formation of an hexaketide, followed by methionine mediated alkylation of C-2 and C-6, and methylation of the reduced C-3 oxygen, pyran forming reductive ring closure, oxygenation of C-4, beta-keto reduction, enoyl reduction and dehydration of the remaining oxygens, and finally, acylation with glycine to complete the biosynthesis. This chain is O-methyltransferase, found in Pyrenophora dematioidea (Helminthosporium dematioideum).